The chain runs to 201 residues: Ephrin-A4 (201 aa).

A signal peptide spans 1–25; the sequence is MRLLPLLRTVLWAAFLGSPLRGGSS. The Ephrin RBD domain maps to 26–155; that stretch reads LRHVVYWNSS…RLQVSVCCKE (130 aa). Asparagine 33 carries N-linked (GlcNAc...) asparagine glycosylation. Cystine bridges form between cysteine 58–cysteine 99 and cysteine 86–cysteine 144. A lipid anchor (GPI-anchor amidated serine) is attached at serine 170. A propeptide spans 171–201 (removed in mature form); that stretch reads GTSGWRGGDTPSPLCLLLLLLLLILRLLRIL.

This sequence belongs to the ephrin family. Expressed in the adult spleen, lymph node, prostate, ovary, small intestine, and colon, and in fetal heart, lung, liver and kidney. Also detected in hematopoietic cell lines.

The protein localises to the cell membrane. It localises to the secreted. Functionally, cell surface GPI-bound ligand for Eph receptors, a family of receptor tyrosine kinases which are crucial for migration, repulsion and adhesion during neuronal, vascular and epithelial development. Binds promiscuously Eph receptors residing on adjacent cells, leading to contact-dependent bidirectional signaling into neighboring cells. May play a role in the interaction between activated B-lymphocytes and dendritic cells in tonsils. The protein is Ephrin-A4 (EFNA4) of Homo sapiens (Human).